The following is a 253-amino-acid chain: Hydroxyacylglutathione hydrolase (253 aa).

Histidine 54, histidine 56, aspartate 58, histidine 59, histidine 112, aspartate 131, and histidine 169 together coordinate Zn(2+).

Belongs to the metallo-beta-lactamase superfamily. Glyoxalase II family. As to quaternary structure, monomer. It depends on Zn(2+) as a cofactor.

It catalyses the reaction an S-(2-hydroxyacyl)glutathione + H2O = a 2-hydroxy carboxylate + glutathione + H(+). The protein operates within secondary metabolite metabolism; methylglyoxal degradation; (R)-lactate from methylglyoxal: step 2/2. Functionally, thiolesterase that catalyzes the hydrolysis of S-D-lactoyl-glutathione to form glutathione and D-lactic acid. The chain is Hydroxyacylglutathione hydrolase from Bartonella tribocorum (strain CIP 105476 / IBS 506).